Consider the following 506-residue polypeptide: Alpha-1,3/1,6-mannosyltransferase alg2 (506 aa).

The next 2 membrane-spanning stretches (helical) occupy residues 82 to 104 and 118 to 138; these read SIFG…MILL and LSTC…YCHF. The N-linked (GlcNAc...) asparagine glycan is linked to N299. 2 helical membrane-spanning segments follow: residues 443 to 463 and 481 to 501; these read LLAV…AATV and LGFM…TVYA.

It belongs to the glycosyltransferase group 1 family. Glycosyltransferase 4 subfamily.

It is found in the endoplasmic reticulum membrane. The enzyme catalyses a beta-D-Man-(1-&gt;4)-beta-D-GlcNAc-(1-&gt;4)-alpha-D-GlcNAc-diphospho-di-trans,poly-cis-dolichol + GDP-alpha-D-mannose = an alpha-D-Man-(1-&gt;3)-beta-D-Man-(1-&gt;4)-beta-D-GlcNAc-(1-&gt;4)-alpha-D-GlcNAc-diphospho-di-trans,poly-cis-dolichol + GDP + H(+). It catalyses the reaction an alpha-D-Man-(1-&gt;3)-beta-D-Man-(1-&gt;4)-beta-D-GlcNAc-(1-&gt;4)-alpha-D-GlcNAc-diphospho-di-trans,poly-cis-dolichol + GDP-alpha-D-mannose = an alpha-D-Man-(1-&gt;3)-[alpha-D-Man-(1-&gt;6)]-beta-D-Man-(1-&gt;4)-beta-D-GlcNAc-(1-&gt;4)-alpha-D-GlcNAc-diphospho-di-trans,poly-cis-dolichol + GDP + H(+). It functions in the pathway protein modification; protein glycosylation. Mannosylates Man(2)GlcNAc(2)-dolichol diphosphate and Man(1)GlcNAc(2)-dolichol diphosphate to form Man(3)GlcNAc(2)-dolichol diphosphate. This chain is Alpha-1,3/1,6-mannosyltransferase alg2 (alg2), found in Schizosaccharomyces pombe (strain 972 / ATCC 24843) (Fission yeast).